The sequence spans 352 residues: V-type ATP synthase subunit C (352 aa).

This sequence belongs to the V-ATPase V0D/AC39 subunit family.

Functionally, produces ATP from ADP in the presence of a proton gradient across the membrane. This Deinococcus radiodurans (strain ATCC 13939 / DSM 20539 / JCM 16871 / CCUG 27074 / LMG 4051 / NBRC 15346 / NCIMB 9279 / VKM B-1422 / R1) protein is V-type ATP synthase subunit C (atpC).